Consider the following 92-residue polypeptide: Large ribosomal subunit protein eL43 (92 aa).

The C4-type zinc finger occupies 39–60; sequence CSFCGKKAVKRGAAGIWNCSSC.

It belongs to the eukaryotic ribosomal protein eL43 family.

The polypeptide is Large ribosomal subunit protein eL43 (RPL43) (Eremothecium gossypii (strain ATCC 10895 / CBS 109.51 / FGSC 9923 / NRRL Y-1056) (Yeast)).